The sequence spans 409 residues: Short chain dehydrogenase sirS (409 aa).

6 residues coordinate NADP(+): V49, L68, K195, V288, T290, and A299. Positions 306-332 are disordered; it reads GVGPEGAGEEEGKGEAEGGAKGATGWS.

The protein belongs to the short-chain dehydrogenases/reductases (SDR) family. Highly divergent.

The protein operates within mycotoxin biosynthesis. In terms of biological role, short chain dehydrogenase; part of the gene cluster that mediates the biosynthesis of sirodesmin PL, an epipolythiodioxopiperazine (ETP) characterized by a disulfide bridged cyclic dipeptide and that acts as a phytotoxin which is involved in the blackleg didease of canola. SirD catalyzes the O-prenylation of L-tyrosine (L-Tyr) in the presence of dimethylallyl diphosphate (DMAPP) to yield 4-O-dimethylallyl-L-Tyr, and therefore represents probably the first pathway-specific enzyme in the biosynthesis of sirodesmin PL. 4-O-dimethylallyl-L-Tyr, then undergoes condensation with L-Ser in a reaction catalyzed by the non-ribosomal peptide synthase sirP to form the diketopiperazine (DKP) backbone. Further bishydroxylation of the DKP performed by the cytochrome P450 monooxygenase sirC leads to the production of the intermediate phomamide. This step is essential to form the reactive thiol group required for toxicity of sirodesmin PL. The next steps of sirodesmin biosynthesis are not well understood yet, but some predictions could be made from intermediate compounds identification. Phomamide is converted into phomalizarine via oxidation, probably by sirT. Further oxidation, methylation (by sirM or sirN) and reduction steps convert phomalizarine to deacetyl sirodesmin. Finally, acetyltransferase sirH probably acetylates deacetyl sirodesmin to produce sirodesmin PL. This is Short chain dehydrogenase sirS from Leptosphaeria maculans (Blackleg fungus).